The primary structure comprises 205 residues: Holliday junction branch migration complex subunit RuvA (205 aa).

Residues 1–62 (MFEYVTGYVE…EDIMALYGFK (62 aa)) are domain I. Positions 63-141 (TREERLLFTK…DVVPDVFVDL (79 aa)) are domain II. Positions 142 to 152 (FSDEERFDEKK) are flexible linker. The tract at residues 153–205 (GSSTELDEALEALRALGYAEREINRVLPELLKESLTTDQYIKKALSLLLNGKR) is domain III.

This sequence belongs to the RuvA family. Homotetramer. Forms an RuvA(8)-RuvB(12)-Holliday junction (HJ) complex. HJ DNA is sandwiched between 2 RuvA tetramers; dsDNA enters through RuvA and exits via RuvB. An RuvB hexamer assembles on each DNA strand where it exits the tetramer. Each RuvB hexamer is contacted by two RuvA subunits (via domain III) on 2 adjacent RuvB subunits; this complex drives branch migration. In the full resolvosome a probable DNA-RuvA(4)-RuvB(12)-RuvC(2) complex forms which resolves the HJ.

The protein resides in the cytoplasm. In terms of biological role, the RuvA-RuvB-RuvC complex processes Holliday junction (HJ) DNA during genetic recombination and DNA repair, while the RuvA-RuvB complex plays an important role in the rescue of blocked DNA replication forks via replication fork reversal (RFR). RuvA specifically binds to HJ cruciform DNA, conferring on it an open structure. The RuvB hexamer acts as an ATP-dependent pump, pulling dsDNA into and through the RuvAB complex. HJ branch migration allows RuvC to scan DNA until it finds its consensus sequence, where it cleaves and resolves the cruciform DNA. The sequence is that of Holliday junction branch migration complex subunit RuvA from Bacillus cytotoxicus (strain DSM 22905 / CIP 110041 / 391-98 / NVH 391-98).